The chain runs to 207 residues: Outer-membrane lipoprotein LolB (207 aa).

The signal sequence occupies residues 1-21 (MPTKTVRCLRLLPLASLLLAA). C22 is lipidated: N-palmitoyl cysteine. C22 carries the S-diacylglycerol cysteine lipid modification.

The protein belongs to the LolB family. Monomer.

It localises to the cell outer membrane. Plays a critical role in the incorporation of lipoproteins in the outer membrane after they are released by the LolA protein. The chain is Outer-membrane lipoprotein LolB from Pectobacterium atrosepticum (strain SCRI 1043 / ATCC BAA-672) (Erwinia carotovora subsp. atroseptica).